The following is a 259-amino-acid chain: Imidazole glycerol phosphate synthase subunit HisF (259 aa).

Residues Asp11 and Asp130 contribute to the active site.

This sequence belongs to the HisA/HisF family. As to quaternary structure, heterodimer of HisH and HisF.

It localises to the cytoplasm. It catalyses the reaction 5-[(5-phospho-1-deoxy-D-ribulos-1-ylimino)methylamino]-1-(5-phospho-beta-D-ribosyl)imidazole-4-carboxamide + L-glutamine = D-erythro-1-(imidazol-4-yl)glycerol 3-phosphate + 5-amino-1-(5-phospho-beta-D-ribosyl)imidazole-4-carboxamide + L-glutamate + H(+). Its pathway is amino-acid biosynthesis; L-histidine biosynthesis; L-histidine from 5-phospho-alpha-D-ribose 1-diphosphate: step 5/9. In terms of biological role, IGPS catalyzes the conversion of PRFAR and glutamine to IGP, AICAR and glutamate. The HisF subunit catalyzes the cyclization activity that produces IGP and AICAR from PRFAR using the ammonia provided by the HisH subunit. The sequence is that of Imidazole glycerol phosphate synthase subunit HisF from Lactococcus lactis subsp. cremoris (strain MG1363).